Here is a 658-residue protein sequence, read N- to C-terminus: Exoribonuclease 2 (658 aa).

In terms of domain architecture, RNB spans 189-530 (REDLTSLYFT…VNHRLIKQVL (342 aa)). The 83-residue stretch at 576–658 (AVEFDCEIAD…ETRSIVGNII (83 aa)) folds into the S1 motif domain.

Belongs to the RNR ribonuclease family. RNase II subfamily.

It localises to the cytoplasm. The catalysed reaction is Exonucleolytic cleavage in the 3'- to 5'-direction to yield nucleoside 5'-phosphates.. Functionally, involved in mRNA degradation. Hydrolyzes single-stranded polyribonucleotides processively in the 3' to 5' direction. This is Exoribonuclease 2 from Actinobacillus pleuropneumoniae serotype 5b (strain L20).